A 514-amino-acid polypeptide reads, in one-letter code: Cytochrome bd-II ubiquinol oxidase subunit 1 (514 aa).

Residues 1 to 22 lie on the Cytoplasmic side of the membrane; it reads MWDVIDLSRWQFALTALYHFLF. H19 lines the heme pocket. The chain crosses the membrane as a helical span at residues 23-42; the sequence is VPLTLGLIFLLAIMETIYVV. Over 43 to 94 the chain is Periplasmic; sequence TGKTIYRDMTRFWGKLFGINFALGVATGLTMEFQFGTNWSFYSNYVGDIFGA. A helical transmembrane segment spans residues 95–114; the sequence is PLAMEALMAFFLESTFVGLF. Residues 115-129 are Cytoplasmic-facing; it reads FFGWQRLNKYQHLLV. Residues 130-149 traverse the membrane as a helical segment; that stretch reads TWLVAFGSNLSALWILNANG. Over 150 to 187 the chain is Periplasmic; that stretch reads WMQYPTGAHFDIDTLRMEMTSFSELVFNPVSQVKFVHT. H186 is a heme binding site. Residues 188-207 traverse the membrane as a helical segment; it reads VMAGYVTGAMFIMAISAWYL. Over 208 to 219 the chain is Cytoplasmic; that stretch reads LRGRERNVALRS. Residues 220 to 239 traverse the membrane as a helical segment; the sequence is FAIGSVFGTLAIIGTLQLGD. The Periplasmic portion of the chain corresponds to 240–392; it reads SSAYEVAQVQ…VAPVFWSFRI (153 aa). Heme is bound at residue M393. The chain crosses the membrane as a helical span at residues 393 to 412; the sequence is MVGCGSLLLLVMLIALVQTL. Residues 413–470 are Cytoplasmic-facing; sequence RGKIDQHRWVLKMALWSLPLPWIAIEAGWFMTEFGRQPWAIQDILPTYSAHSALTTGQ. A helical transmembrane segment spans residues 471 to 490; it reads LAFSLIMIVGLYTLFLIAEV. The Periplasmic portion of the chain corresponds to 491 to 514; that stretch reads YLMQKYARLGPSAMQSEQPTQQQG.

The protein belongs to the cytochrome ubiquinol oxidase subunit 1 family. Heterodimer of subunits I and II. It depends on heme as a cofactor. Post-translationally, the N-terminus is blocked.

The protein resides in the cell inner membrane. The catalysed reaction is 2 a ubiquinol + O2 + n H(+)(in) = 2 a ubiquinone + 2 H2O + n H(+)(out). Its pathway is energy metabolism; oxidative phosphorylation. Its activity is regulated as follows. Inhibited by cyanide; is more sensitive to cyanide than cytochrome bd-I oxidase. In terms of biological role, a terminal oxidase that catalyzes quinol-dependent, Na(+)-independent oxygen uptake. Prefers menadiol over other quinols although ubiquinol was not tested. Generates a proton motive force using protons and electrons from opposite sides of the membrane to generate H(2)O, transferring 1 proton/electron. In Escherichia coli (strain K12), this protein is Cytochrome bd-II ubiquinol oxidase subunit 1 (appC).